A 278-amino-acid chain; its full sequence is S-formylglutathione hydrolase YeiG (278 aa).

Residues S145, D223, and H256 each act as charge relay system in the active site.

The protein belongs to the esterase D family.

It catalyses the reaction S-formylglutathione + H2O = formate + glutathione + H(+). In terms of biological role, serine hydrolase involved in the detoxification of formaldehyde. Hydrolyzes S-formylglutathione to glutathione and formate. The chain is S-formylglutathione hydrolase YeiG (yeiG) from Escherichia coli O6:K15:H31 (strain 536 / UPEC).